The sequence spans 80 residues: uncharacterized protein (80 aa).

This is an uncharacterized protein from Acidianus filamentous virus 1 (isolate United States/Yellowstone) (AFV-1).